Here is a 138-residue protein sequence, read N- to C-terminus: Basic phospholipase A2 Drk-b1 (138 aa).

Residues 1–16 (MRTLWIVAMCLIGVEG) form the signal peptide. Disulfide bonds link C42–C131, C44–C60, C59–C111, C65–C138, C66–C104, C73–C97, and C91–C102. 3 residues coordinate Ca(2+): Y43, G45, and G47. H63 is an active-site residue. D64 contacts Ca(2+). The active site involves D105.

It depends on Ca(2+) as a cofactor. Expressed by the venom gland.

It localises to the secreted. It catalyses the reaction a 1,2-diacyl-sn-glycero-3-phosphocholine + H2O = a 1-acyl-sn-glycero-3-phosphocholine + a fatty acid + H(+). Exhibits high hydrolytic activities and shows strong preference for the anionic micelles (dPPC with deoxycholate) to the zwitterionic micelles (dPPC with Triton X-100). PLA2 catalyzes the calcium-dependent hydrolysis of the 2-acyl groups in 3-sn-phosphoglycerides. This is Basic phospholipase A2 Drk-b1 from Daboia russelii (Russel's viper).